Consider the following 152-residue polypeptide: Catabolic 3-dehydroquinase 1 (152 aa).

Catalysis depends on Tyr-24, which acts as the Proton acceptor. Residues Asn-75, His-81, and Asp-88 each coordinate substrate. His-101 serves as the catalytic Proton donor. Substrate contacts are provided by residues 102-103 (VS) and Arg-112.

It belongs to the type-II 3-dehydroquinase family. In terms of assembly, homododecamer. Adopts a ring-like structure, composed of an arrangement of two hexameric rings stacked on top of one another.

It carries out the reaction 3-dehydroquinate = 3-dehydroshikimate + H2O. It participates in aromatic compound metabolism; 3,4-dihydroxybenzoate biosynthesis; 3,4-dihydroxybenzoate from 3-dehydroquinate: step 1/2. In terms of biological role, is involved in the catabolism of quinate. Allows the utilization of quinate as carbon source via the beta-ketoadipate pathway. In Aspergillus terreus (strain NIH 2624 / FGSC A1156), this protein is Catabolic 3-dehydroquinase 1.